The sequence spans 465 residues: UDP-N-acetylmuramate--L-alanine ligase (465 aa).

ATP is bound at residue 125-131 (GTHGKTT).

Belongs to the MurCDEF family.

Its subcellular location is the cytoplasm. It catalyses the reaction UDP-N-acetyl-alpha-D-muramate + L-alanine + ATP = UDP-N-acetyl-alpha-D-muramoyl-L-alanine + ADP + phosphate + H(+). It participates in cell wall biogenesis; peptidoglycan biosynthesis. Its function is as follows. Cell wall formation. The protein is UDP-N-acetylmuramate--L-alanine ligase of Deinococcus geothermalis (strain DSM 11300 / CIP 105573 / AG-3a).